The following is a 1430-amino-acid chain: MNELMNIFGQPQGPQSFDQIRISIASPERIRSWSFGEIKKPETINYRTFKPERDGLFCARIFGPIKDYECLCGKYKRMKYRGIICEKCGVEVTLSKVRRERMGHIELASPVAHIWFLKSLPSRIGLLLDMTLKDLERILYFENYVVIEPGLTDLKLHELLSEDQLLDKQDKFGEDAFTAKIGAEAMKDLLANLDLIEEKATCREELKETASEAKRKKLVKRLKLIEAFLGPSQEVEDVAAYERFEGYKERIERPDARPLFKIFPDATRPEWMILEVVPVIPPELRPLVPLDGGRFATSDLNDLYRRVINRNNRLKRLIELKAPDIIVRNEKRMLQEAVDALFDNGRRGRVITGANKRPLKSISDMLKGKQGRFRQNLLGKRVDYSGRSVIVVGPELKLHQCGLPKKMALELFKPFIYAKLELYGLASTIKAAKRMVEKERPEVWDILEEVIREHPVMLNRAPTLHRLGIQAFEPTLIEGKAIQLHPLVCTAFNADFDGDQMAVHVPLSLEAQLEARVLMMSTNNILSPASGRPIIVPSQDIVLGLYYITMELPGMVGEGMAFGTIGEIEHALASKAVSLHAKIQCRYKTVDDEGNPITVRVTTTPGRMLLSEILPRHKAIKFDLINRLLTKKEIGNIIDVVYRHCGQKETVIFADRLMKLGFSNAFKAGISFGKDDMVIPAEKEILIREAQDRVKEYEQQYLDGLITQGEKYNKVVDVWSETTEKVASAMMKVIEQPKPGFGVNSVYMMAHSGARGSAAQIKQLAGMRGLMAKPSGEIIETPIISNFKEGLTVLEYFNSTHGARKGLADTALKTANSGYLTRRLVDVAQDAIIVENDCGTTRGITMKAVIDGGEIVVPLGERILGRTVSVDIIHPLTGEMLVAAGDMITEREVEVIERAGIDSVHIRSVLTCETRDGVCAQCYGRDLARGTRVNMGEAVGVIAAQSIGEPGTQLTMRTFHIGGAAQRGAEQSFIEATLDAKVMVKNRNLVMNSEGVPVVMGRNCELALLDEQGRERARHRVPYGAKLNKALAADGAMIKKGDRLAEWDPYTLPILTEREGIANYVDLVEGVSVREVVDEATGISSKVVTDWRQQPRGADLRPRITLRDETGEVVKLPNGLEARYYMSVDAILSVENGARVRAGDVLARIPRESSKTRDITGGLPRVAELFEARRPKDFAIISDIDGRVEFGKDYKTKRRIVVRNDETGEEKEYLIPKGKHISVQEGDYVQKGDLLMDGNPVPHDILAVMGVESLANYLINEIQDVYRLQGVKINDKHIEVIVRQMLQKVEITDPGDTTLLAGEQVDRTEFEEENRLVQQRMNEGEQDLRFAIAKPVLQGITKASLQTRSFISAASFQETTRVLTEAAVQGKVDNLEGLKENVIVGRLIPAGTGSVVNRLKQIAAERDKALQLADGVDETPALADGGEAAA.

Residues Cys70, Cys72, Cys85, and Cys88 each coordinate Zn(2+). Mg(2+) is bound by residues Asp495, Asp497, and Asp499. Zn(2+) contacts are provided by Cys838, Cys912, Cys919, and Cys922.

It belongs to the RNA polymerase beta' chain family. The RNAP catalytic core consists of 2 alpha, 1 beta, 1 beta' and 1 omega subunit. When a sigma factor is associated with the core the holoenzyme is formed, which can initiate transcription. Requires Mg(2+) as cofactor. Zn(2+) is required as a cofactor.

The enzyme catalyses RNA(n) + a ribonucleoside 5'-triphosphate = RNA(n+1) + diphosphate. DNA-dependent RNA polymerase catalyzes the transcription of DNA into RNA using the four ribonucleoside triphosphates as substrates. The protein is DNA-directed RNA polymerase subunit beta' of Rhodospirillum centenum (strain ATCC 51521 / SW).